Consider the following 326-residue polypeptide: Transmembrane protein 171 (326 aa).

4 consecutive transmembrane segments (helical) span residues 22–42 (IFFLFVIGAILLCVGVLLSIF), 57–77 (MMLKIAGPACAVVGLGAVILA), 114–134 (LIFGFLFLTSGMLISVLGIWV), and 161–181 (FLSLQILGPLIVLVGLCFFVV). Residues 229–326 (FPESSASAAA…LSPSSEPSPP (98 aa)) are disordered. Residues 230–240 (PESSASAAARS) show a composition bias toward low complexity. The segment covering 257–266 (SIFQSGSPTP) has biased composition (polar residues). 2 stretches are compositionally biased toward low complexity: residues 288–302 (SSSETSHTLHLLSEL) and 312–326 (ATTTSLSPSSEPSPP).

The protein localises to the membrane. The polypeptide is Transmembrane protein 171 (TMEM171) (Bos taurus (Bovine)).